Reading from the N-terminus, the 162-residue chain is Cytochrome c-type biogenesis protein CcmE (162 aa).

The Cytoplasmic portion of the chain corresponds to 1 to 8 (MNPVRKKR). The helical; Signal-anchor for type II membrane protein transmembrane segment at 9-29 (LIIVLAIVAGVGAAVGLALSA) threads the bilayer. The Periplasmic portion of the chain corresponds to 30 to 162 (LQQNINLFYT…GETSYNQEGK (133 aa)). 2 residues coordinate heme: H124 and Y128. Basic and acidic residues predominate over residues 139–148 (DSGQLKHYEN). Residues 139–162 (DSGQLKHYENGKAAGETSYNQEGK) form a disordered region.

It belongs to the CcmE/CycJ family.

It localises to the cell inner membrane. Heme chaperone required for the biogenesis of c-type cytochromes. Transiently binds heme delivered by CcmC and transfers the heme to apo-cytochromes in a process facilitated by CcmF and CcmH. In Pseudomonas aeruginosa (strain ATCC 15692 / DSM 22644 / CIP 104116 / JCM 14847 / LMG 12228 / 1C / PRS 101 / PAO1), this protein is Cytochrome c-type biogenesis protein CcmE.